The primary structure comprises 278 residues: Biotin synthase (278 aa).

The Radical SAM core domain maps to 1–227; that stretch reads MQIMLCAISN…QSVVMVAGGR (227 aa). Residues Cys-16, Cys-20, and Cys-23 each coordinate [4Fe-4S] cluster. The [2Fe-2S] cluster site is built by Cys-60, Cys-95, and Cys-153.

The protein belongs to the radical SAM superfamily. Biotin synthase family. Homodimer. [4Fe-4S] cluster serves as cofactor. Requires [2Fe-2S] cluster as cofactor.

The enzyme catalyses (4R,5S)-dethiobiotin + (sulfur carrier)-SH + 2 reduced [2Fe-2S]-[ferredoxin] + 2 S-adenosyl-L-methionine = (sulfur carrier)-H + biotin + 2 5'-deoxyadenosine + 2 L-methionine + 2 oxidized [2Fe-2S]-[ferredoxin]. The protein operates within cofactor biosynthesis; biotin biosynthesis; biotin from 7,8-diaminononanoate: step 2/2. Functionally, catalyzes the conversion of dethiobiotin (DTB) to biotin by the insertion of a sulfur atom into dethiobiotin via a radical-based mechanism. This Campylobacter jejuni (strain RM1221) protein is Biotin synthase.